The chain runs to 164 residues: Putative anionic 4-hydroxy-benzoate permease (164 aa).

The disordered stretch occupies residues 1–30; sequence CGRRRGSLAWPDASSPSANPRPGAGAAESS. Transmembrane regions (helical) follow at residues 62-82, 97-117, and 126-146; these read LWVACFGFGTGACIILALMFM, GMAQCVGYLLAAFGPPLVGGL, and PALTVCLVLSLTMAAAGMLAG.

It belongs to the major facilitator superfamily. Cyanate porter (TC 2.A.1.17) family.

Its subcellular location is the cell membrane. May be involved in uptake of anionic 4-hydroxy-benzoate. The polypeptide is Putative anionic 4-hydroxy-benzoate permease (Thauera aromatica).